The chain runs to 443 residues: ATP-dependent protease ATPase subunit HslU (443 aa).

ATP-binding positions include Ile18, 60-65 (GVGKTE), Asp256, Glu321, and Arg393.

The protein belongs to the ClpX chaperone family. HslU subfamily. In terms of assembly, a double ring-shaped homohexamer of HslV is capped on each side by a ring-shaped HslU homohexamer. The assembly of the HslU/HslV complex is dependent on binding of ATP.

The protein localises to the cytoplasm. Its function is as follows. ATPase subunit of a proteasome-like degradation complex; this subunit has chaperone activity. The binding of ATP and its subsequent hydrolysis by HslU are essential for unfolding of protein substrates subsequently hydrolyzed by HslV. HslU recognizes the N-terminal part of its protein substrates and unfolds these before they are guided to HslV for hydrolysis. The sequence is that of ATP-dependent protease ATPase subunit HslU from Vibrio cholerae serotype O1 (strain ATCC 39315 / El Tor Inaba N16961).